The primary structure comprises 108 residues: MVMATTLFLLAGLAEIGGGYLIWLWLRDGKPVYLGLFGAVALALYGVIATFQAFPSFGRVYAAYGGVFIFLAVLWGWWIDGKAPDTYDWIGAVICLVGVGIMLWAPRP.

The next 4 membrane-spanning stretches (helical) occupy residues 6 to 26 (TLFL…WLWL), 31 to 51 (PVYL…IATF), 60 to 80 (VYAA…WWID), and 86 to 106 (TYDW…LWAP).

Belongs to the UPF0060 family.

It localises to the cell membrane. The protein is UPF0060 membrane protein BH2744 of Halalkalibacterium halodurans (strain ATCC BAA-125 / DSM 18197 / FERM 7344 / JCM 9153 / C-125) (Bacillus halodurans).